The following is a 433-amino-acid chain: Serine hydroxymethyltransferase (433 aa).

121 to 123 (AHV) contributes to the (6S)-5,6,7,8-tetrahydrofolate binding site. N6-(pyridoxal phosphate)lysine is present on Lys227. Glu243 contacts (6S)-5,6,7,8-tetrahydrofolate.

This sequence belongs to the SHMT family. As to quaternary structure, homodimer. Pyridoxal 5'-phosphate serves as cofactor.

The protein localises to the cytoplasm. Its pathway is amino-acid biosynthesis; glycine biosynthesis; glycine from L-serine: step 1/1. Functionally, catalyzes the reversible interconversion of serine and glycine with a modified folate serving as the one-carbon carrier. Also exhibits a pteridine-independent aldolase activity toward beta-hydroxyamino acids, producing glycine and aldehydes, via a retro-aldol mechanism. The sequence is that of Serine hydroxymethyltransferase from Saccharolobus islandicus (strain Y.N.15.51 / Yellowstone #2) (Sulfolobus islandicus).